The following is a 345-amino-acid chain: Phosphoribosylformylglycinamidine cyclo-ligase (345 aa).

It belongs to the AIR synthase family.

The protein resides in the cytoplasm. The catalysed reaction is 2-formamido-N(1)-(5-O-phospho-beta-D-ribosyl)acetamidine + ATP = 5-amino-1-(5-phospho-beta-D-ribosyl)imidazole + ADP + phosphate + H(+). It participates in purine metabolism; IMP biosynthesis via de novo pathway; 5-amino-1-(5-phospho-D-ribosyl)imidazole from N(2)-formyl-N(1)-(5-phospho-D-ribosyl)glycinamide: step 2/2. The chain is Phosphoribosylformylglycinamidine cyclo-ligase from Synechococcus sp. (strain CC9902).